We begin with the raw amino-acid sequence, 75 residues long: Guanine nucleotide-binding protein G(I)/G(S)/G(O) subunit gamma-4 (75 aa).

Cys72 is modified (cysteine methyl ester). A lipid anchor (S-geranylgeranyl cysteine) is attached at Cys72. The propeptide at 73–75 (TIL) is removed in mature form.

Belongs to the G protein gamma family. In terms of assembly, g proteins are composed of 3 units, alpha, beta and gamma. Interacts with beta-1 and beta-2, but not with beta-3. Interacts with KCNK1. Interacts (via C-terminus) with KCNK2/TREK-1 (via N-terminus); this interaction confers ion selectivity to Cl(-) and L-glutamate. In terms of tissue distribution, brain.

It is found in the cell membrane. Its function is as follows. Guanine nucleotide-binding proteins (G proteins) are involved as a modulator or transducer in various transmembrane signaling systems. The beta and gamma chains are required for the GTPase activity, for replacement of GDP by GTP, and for G protein-effector interaction. In Mus musculus (Mouse), this protein is Guanine nucleotide-binding protein G(I)/G(S)/G(O) subunit gamma-4 (Gng4).